We begin with the raw amino-acid sequence, 42 residues long: uncharacterized protein (42 aa).

A disordered region spans residues 1 to 42 (MTTGKPQSFEKMRTPFPGRSKAKGPQSDIIPSAPPNTPVTEH). Positions 32–42 (SAPPNTPVTEH) are enriched in pro residues.

This is an uncharacterized protein from Schizosaccharomyces pombe (strain 972 / ATCC 24843) (Fission yeast).